The sequence spans 441 residues: MAIGNPEVATMGKENTEAESSNGNESQLSSDLTKSLDLAEVKEDEKDNNQEEEDGLKAEASTKKKKKKSKSKKKKSSLQQTDPPSIPVLELFPSGDFPQGEIQQYNDDNLWRTTSEEKREMERLQKPIYNSLRQAAEVHRQVRKYMRSILKPGMLMIDLCETLENTVRKLISENGLQAGIAFPTGCSLNNVAAHWTPNSGDKTVLQYDDVMKLDFGTHIDGHIVDSAFTVAFNPMFDPLLAASRDATYTGIKEAGVDVRLCDVGAAVQEVMESYEVEINGKVYQVKSIRNLNGHSIGRYQIHAEKSVPNVRGGEQTKMEEGELYAIETFGSTGKGYVREDLECSHYMKNYDVGHVPLRLPRAKQLLATINKNFSTLAFCRRYLDRLGETKYLMALKNLCDSGIIEPCPPVCDVKGSYISQFEHTILLRPTCKEIISKGDDY.

The disordered stretch occupies residues 1–103 (MAIGNPEVAT…SGDFPQGEIQ (103 aa)). Residues 18-33 (AESSNGNESQLSSDLT) are compositionally biased toward polar residues. Residues 37-62 (DLAEVKEDEKDNNQEEEDGLKAEAST) are compositionally biased toward basic and acidic residues. Over residues 63–76 (KKKKKKSKSKKKKS) the composition is skewed to basic residues. His194 lines the substrate pocket. A divalent metal cation is bound by residues Asp214, Asp225, and His294. His302 serves as a coordination point for substrate. A divalent metal cation-binding residues include Glu327 and Glu422.

The protein belongs to the peptidase M24A family. Methionine aminopeptidase eukaryotic type 2 subfamily. The cofactor is Co(2+). It depends on Zn(2+) as a cofactor. Mn(2+) serves as cofactor. Fe(2+) is required as a cofactor. In terms of tissue distribution, ubiquitous. Preferentially expressed in roots.

It is found in the cytoplasm. It carries out the reaction Release of N-terminal amino acids, preferentially methionine, from peptides and arylamides.. Functionally, cotranslationally removes the N-terminal methionine from nascent proteins. The N-terminal methionine is often cleaved when the second residue in the primary sequence is small and uncharged (Met-Ala-, Cys, Gly, Pro, Ser, Thr, or Val). The polypeptide is Methionine aminopeptidase 2A (Arabidopsis thaliana (Mouse-ear cress)).